An 898-amino-acid polypeptide reads, in one-letter code: Serine/threonine-protein kinase PKH3 (898 aa).

Positions 11–293 (FIFKEELGHG…LEQIKRHPYF (283 aa)) constitute a Protein kinase domain. Residues 17–25 (LGHGSYSTV) and Lys-41 contribute to the ATP site. Asp-138 serves as the catalytic Proton acceptor. Disordered regions lie at residues 435–484 (PPKV…PSTE) and 675–850 (DSKA…EKYS). The segment covering 459–468 (PLQTSSIPQK) has biased composition (polar residues). A compositionally biased stretch (low complexity) spans 469-483 (LSTSSASSALSAPST). Ser-696 bears the Phosphoserine mark. The segment covering 697 to 721 (IGNNVTTLSYTAKNGSQNNAPQNDN) has biased composition (polar residues). Positions 723 to 738 (GEEKPFRIPSSTKDRP) are enriched in basic and acidic residues. Polar residues-rich tracts occupy residues 740-758 (ANSTPSSRHPRVLSSNNAG), 771-782 (SAPSTNTYTNGS), and 789-803 (RPSTNVGNNKHNILT). Ser-753 carries the post-translational modification Phosphoserine. Residues 804–817 (SKKQGSSVFSPSSS) are compositionally biased toward low complexity. Polar residues predominate over residues 818 to 831 (TTKPQIKTTGYRQP). At Ser-871 the chain carries Phosphoserine.

The protein belongs to the protein kinase superfamily. Ser/Thr protein kinase family.

The catalysed reaction is L-seryl-[protein] + ATP = O-phospho-L-seryl-[protein] + ADP + H(+). The enzyme catalyses L-threonyl-[protein] + ATP = O-phospho-L-threonyl-[protein] + ADP + H(+). Its function is as follows. Serine/threonine-protein kinase which may phosphorylate the same targets substrates as PKH1 and PKH2, 2 upstream activators of PKC1. In Saccharomyces cerevisiae (strain ATCC 204508 / S288c) (Baker's yeast), this protein is Serine/threonine-protein kinase PKH3 (PKH3).